Here is a 492-residue protein sequence, read N- to C-terminus: Pyrin and HIN domain-containing protein 1 (492 aa).

Residues 1-88 enclose the Pyrin domain; it reads MANNYKKIVL…AETLKREKLK (88 aa). Disordered regions lie at residues 106-199 and 400-492; these read KTKQ…KPLA and KNTN…PAVP. Over residues 142 to 159 the composition is skewed to basic and acidic residues; the sequence is PSEEETGTKRSKMSKEQT. The segment covering 160-173 has biased composition (polar residues); that stretch reads RPSCSAGASTSTAM. A compositionally biased stretch (low complexity) spans 181–194; it reads TSSSAPPNTSSTES. An HIN-200 domain is found at 199–399; sequence ANRHATASKN…SEMHSFIQIQ (201 aa). Composition is skewed to polar residues over residues 416 to 432 and 460 to 492; these read QEQS…TTLP and GAQS…PAVP.

It belongs to the HIN-200 family. Interacts with MDM2. In terms of tissue distribution, expressed in spleen, lymph node and peripheral blood leukocytes, and at lower levels in thymus, bone marrow and fetal liver. Down-regulated in breast tumors.

The protein resides in the nucleus. The protein localises to the nucleoplasm. Its subcellular location is the nucleus speckle. Its function is as follows. Major mediator of the tumor suppressor activity of IFN in breast cancer cells. Promotes ubiquitination and subsequent degradation of MDM2, which leads to p53/TP53 stabilization. Promotes ubiquitination and subsequent degradation of HDAC1, which in turn enhances maspin expression, and impairs invasive activity of cancer cells. The polypeptide is Pyrin and HIN domain-containing protein 1 (PYHIN1) (Homo sapiens (Human)).